The primary structure comprises 196 residues: DnaA initiator-associating protein DiaA (196 aa).

The SIS domain occupies leucine 34–aspartate 196.

Belongs to the SIS family. DiaA subfamily. In terms of assembly, homotetramer; dimer of dimers.

In terms of biological role, required for the timely initiation of chromosomal replication via direct interactions with the DnaA initiator protein. The sequence is that of DnaA initiator-associating protein DiaA from Enterobacter sp. (strain 638).